Reading from the N-terminus, the 1168-residue chain is Carboxylic acid reductase (1168 aa).

AMP is bound by residues histidine 290, serine 385, 407–408, threonine 412, aspartate 485, 497–500, lysine 506, and lysine 606; these read EG and YLDR. Residues 645–720 form the Carrier domain; that stretch reads APVLPTLCRA…ALADHIEAAR (76 aa). Serine 679 carries the post-translational modification O-(pantetheine 4'-phosphoryl)serine. Residues 777 to 780, arginine 804, arginine 814, 844 to 845, 870 to 872, serine 910, tyrosine 946, and lysine 950 contribute to the NADP(+) site; these read TGFL, DK, and PAA.

The protein belongs to the ATP-dependent AMP-binding enzyme family. Carboxylic acid reductase subfamily. Requires pantetheine 4'-phosphate as cofactor.

It catalyses the reaction a carboxylate + ATP + NADPH + H(+) = an aldehyde + AMP + diphosphate + NADP(+). It carries out the reaction a medium-chain fatty acid + ATP + H(+) = a medium-chain fatty acyl-AMP + diphosphate. The enzyme catalyses a long-chain fatty acid + ATP + H(+) = a long-chain fatty acyl-AMP + diphosphate. The catalysed reaction is dodecanoate + ATP + H(+) = dodecanoyl-AMP + diphosphate. It catalyses the reaction hexadecanoate + ATP + H(+) = hexadecanoyl-AMP + diphosphate. Its function is as follows. Catalyzes the ATP- and NADPH-dependent reduction of carboxylic acids to the corresponding aldehydes. In vitro, also catalyzes the activation of medium/long-chain fatty acids as acyl-adenylates (acyl-AMP). The protein is Carboxylic acid reductase of Mycobacterium tuberculosis (strain ATCC 25618 / H37Rv).